A 673-amino-acid polypeptide reads, in one-letter code: Clotting factor G alpha subunit (673 aa).

A signal peptide spans 1 to 19 (MLVLLCCVVLHVGVARICC). The region spanning 27 to 257 (LVWSDEFTNG…YVRVYQDAST (231 aa)) is the GH16 domain. The Nucleophile role is filled by Glu-137. The active-site Proton donor is the Glu-142. The N-linked (GlcNAc...) asparagine glycan is linked to Asn-186. Positions 266 to 404 (LDGYYFVQNR…NQLSGQWKLI (139 aa)) constitute a Ricin B-type lectin domain. CBM6 domains follow at residues 411–533 (KLIQ…IKIT) and 549–671 (KLIQ…IRIT).

Belongs to the glycosyl hydrolase 16 family. Clotting factor G is a heterodimer composed of two non-covalently associated subunits, alpha and beta. In presence of (1-&gt;3)-beta-glucan, proteolytically cleaved into a 55kDa and a 17kDa forms. As to expression, expressed in hemocytes (at protein level).

Component of the heterodimer clotting factor G which may play a role in defense mechanisms against fungi. Initiates a (1-&gt;3)-beta-glucan-sensing clotting pathway whereby the alpha subunit binds to glucans containing (1-&gt;3)-beta linkages, which are components of the fungal cell wall, and the beta subunit catalyzes the activation of proclotting enzyme. In Tachypleus tridentatus (Japanese horseshoe crab), this protein is Clotting factor G alpha subunit.